Consider the following 281-residue polypeptide: Protein phosphatase 2C homolog 1 (281 aa).

One can recognise a PPM-type phosphatase domain in the interval 20–281 (RVGVAENKNS…DNVTVMVVFL (262 aa)). Positions 58, 59, 233, and 272 each coordinate Mn(2+).

The protein belongs to the PP2C family. In terms of assembly, interacts with NBP2 and PBS2. Mg(2+) serves as cofactor. Requires Mn(2+) as cofactor.

The protein localises to the peroxisome. It catalyses the reaction O-phospho-L-seryl-[protein] + H2O = L-seryl-[protein] + phosphate. The catalysed reaction is O-phospho-L-threonyl-[protein] + H2O = L-threonyl-[protein] + phosphate. Functionally, serine and threonine phosphatase. Involved in tRNA splicing and cell separation. The polypeptide is Protein phosphatase 2C homolog 1 (PTC1) (Saccharomyces cerevisiae (strain ATCC 204508 / S288c) (Baker's yeast)).